The primary structure comprises 481 residues: Cysteine--tRNA ligase (481 aa).

Cysteine 43 is a Zn(2+) binding site. Residues 45-55 (ATVQGLPHIGH) carry the 'HIGH' region motif. Residues cysteine 221, histidine 246, and glutamate 250 each coordinate Zn(2+). A 'KMSKS' region motif is present at residues 277–281 (KMSKS). Lysine 280 contributes to the ATP binding site.

Belongs to the class-I aminoacyl-tRNA synthetase family. In terms of assembly, monomer. Zn(2+) serves as cofactor.

The protein resides in the cytoplasm. The catalysed reaction is tRNA(Cys) + L-cysteine + ATP = L-cysteinyl-tRNA(Cys) + AMP + diphosphate. This chain is Cysteine--tRNA ligase, found in Mycobacterium sp. (strain KMS).